Consider the following 337-residue polypeptide: Arylacetonitrilase (337 aa).

One can recognise a CN hydrolase domain in the interval 7-278 (VRVAVTQHEP…EGFVYADLDL (272 aa)). Glu-47 functions as the Proton acceptor in the catalytic mechanism. Lys-127 is a catalytic residue. The active-site Nucleophile is the Cys-162. The interval 311 to 337 (QHRPEGQADNAAYGLDVPSGLVEEEGA) is disordered.

This sequence belongs to the carbon-nitrogen hydrolase superfamily. Nitrilase family.

The catalysed reaction is a nitrile + 2 H2O = a carboxylate + NH4(+). It carries out the reaction 4-chlorophenylacetonitrile + 2 H2O = 4-chlorophenylacetate + NH4(+). In terms of biological role, nitrilase that hydrolyzes preferentially phenylacetonitrile, but also (R,S)-mandelonitrile, and 2-phenylpropionitrile. The chain is Arylacetonitrilase from Aspergillus niger (strain ATCC MYA-4892 / CBS 513.88 / FGSC A1513).